Reading from the N-terminus, the 245-residue chain is Chloride intracellular channel protein 2 (245 aa).

A required for insertion into the membrane region spans residues 1–96 (MASLALNTQA…EEFLEKTLAP (96 aa)). Glu-25 lines the glutathione pocket. Positions 30–33 (CPFC) match the G-site motif. Cys-30 and Cys-33 are joined by a disulfide. Residues 32–52 (FCQRLFMILWLKGVKFNVTTI) form a helical membrane-spanning segment. One can recognise a GST C-terminal domain in the interval 76–239 (NKELKTDFIK…PEDKEIENTY (164 aa)). Glutathione is bound at residue His-227.

It belongs to the chloride channel CLIC family. Monomer. Interacts with TRAPPC2 and RYR2.

The protein localises to the cytoplasm. The protein resides in the membrane. The enzyme catalyses chloride(in) = chloride(out). It catalyses the reaction tert-butyl hydroperoxide + 2 glutathione = tert-butanol + glutathione disulfide + H2O. It carries out the reaction cumene hydroperoxide + 2 glutathione = 2-phenylpropan-2-ol + glutathione disulfide + H2O. In the soluble state, catalyzes glutaredoxin-like thiol disulfide exchange reactions with reduced glutathione as electron donor. Displays weak glutathione peroxidase activity. Can insert into membranes and form chloride ion channels. Membrane insertion seems to be redox-regulated and may occur only under oxidizing conditions. Modulates the activity of RYR2 and inhibits calcium influx. This chain is Chloride intracellular channel protein 2, found in Rattus norvegicus (Rat).